A 195-amino-acid chain; its full sequence is Putative lysine exporter (195 aa).

Helical transmembrane passes span 4 to 24 (LLSA…WLHF), 30 to 50 (LYVL…NGIS), 61 to 81 (LMMG…SAFF), 86 to 106 (ITQG…SVVL), 117 to 137 (IAFF…PLFM), and 170 to 190 (PIAI…LVFF).

This sequence belongs to the LysO family.

It is found in the cell inner membrane. Mediates export of lysine. This is Putative lysine exporter from Haemophilus influenzae (strain ATCC 51907 / DSM 11121 / KW20 / Rd).